The chain runs to 1071 residues: Methionine S-methyltransferase (1071 aa).

Position 2 is an N-acetylalanine (A2).

The protein belongs to the class I-like SAM-binding methyltransferase superfamily. Homotetramer. As to expression, expressed in roots, rosette leaves and cauline leaves. Expressed at a lower level in developing seeds.

It is found in the cytoplasm. The enzyme catalyses L-methionine + S-adenosyl-L-methionine = S-methyl-L-methionine + S-adenosyl-L-homocysteine. Its function is as follows. Catalyzes the S-methylmethionine (SMM) biosynthesis from adenosyl-L-homocysteine (AdoMet) and methionine. SMM biosynthesis (by MMT1) and degradation (by HMT-1, HMT-2 and HMT-3) constitute the SMM cycle in plants, which is probably required to achieve short term control of AdoMet level. Also able to catalyze the selenium-methylmethionine (SeMM) from AdoMet and selenium-methionine (SeMet). May play a role in phoem sulfur transport; such function is however not essential. In Arabidopsis thaliana (Mouse-ear cress), this protein is Methionine S-methyltransferase (MMT1).